The primary structure comprises 377 residues: Anhydro-N-acetylmuramic acid kinase (377 aa).

18 to 25 is a binding site for ATP; sequence GTSADGID.

It belongs to the anhydro-N-acetylmuramic acid kinase family.

It carries out the reaction 1,6-anhydro-N-acetyl-beta-muramate + ATP + H2O = N-acetyl-D-muramate 6-phosphate + ADP + H(+). It functions in the pathway amino-sugar metabolism; 1,6-anhydro-N-acetylmuramate degradation. The protein operates within cell wall biogenesis; peptidoglycan recycling. Functionally, catalyzes the specific phosphorylation of 1,6-anhydro-N-acetylmuramic acid (anhMurNAc) with the simultaneous cleavage of the 1,6-anhydro ring, generating MurNAc-6-P. Is required for the utilization of anhMurNAc either imported from the medium or derived from its own cell wall murein, and thus plays a role in cell wall recycling. The sequence is that of Anhydro-N-acetylmuramic acid kinase from Xanthomonas campestris pv. campestris (strain 8004).